The chain runs to 158 residues: C-type lectin mannose-binding isoform (158 aa).

The first 20 residues, 1–20 (MGRFLLVTLSMLVVTFSLNE), serve as a signal peptide directing secretion. Cystine bridges form between cysteine 26–cysteine 37, cysteine 54–cysteine 154, and cysteine 129–cysteine 146. Residues 33 to 155 (KNGFCYKVFN…CEALYHFICQ (123 aa)) enclose the C-type lectin domain. Positions 119-121 (EPN) match the Mannose-binding motif. A glycan (N-linked (GlcNAc...) asparagine) is linked at asparagine 121. Ca(2+) contacts are provided by glutamate 127, asparagine 142, and aspartate 143.

Belongs to the true venom lectin family. Homodimer; disulfide-linked. In terms of tissue distribution, expressed by the venom gland.

It localises to the secreted. Its function is as follows. Mannose-binding lectin that binds to and agglutinates erythrocytes in a calcium-dependent manner. This is C-type lectin mannose-binding isoform from Notechis scutatus scutatus (Mainland tiger snake).